A 170-amino-acid chain; its full sequence is Adenine phosphoribosyltransferase (170 aa).

It belongs to the purine/pyrimidine phosphoribosyltransferase family. In terms of assembly, homodimer.

The protein localises to the cytoplasm. The enzyme catalyses AMP + diphosphate = 5-phospho-alpha-D-ribose 1-diphosphate + adenine. It participates in purine metabolism; AMP biosynthesis via salvage pathway; AMP from adenine: step 1/1. Its function is as follows. Catalyzes a salvage reaction resulting in the formation of AMP, that is energically less costly than de novo synthesis. This Fervidobacterium nodosum (strain ATCC 35602 / DSM 5306 / Rt17-B1) protein is Adenine phosphoribosyltransferase.